Reading from the N-terminus, the 33-residue chain is U1-pseudomyrmecitoxin-Pt1 subunit LS1 (33 aa).

This sequence belongs to the myrmexin family. As to quaternary structure, heterodimer composed of subunit LS1 and subunit SS1 (U1-PSDTX-Pt1b), heterodimer composed of subunit LS1 and SS2 (U1-PSDTX-Pt1b), and heterodimer composed of subunit LS1 and SS3; disulfide-linked. In terms of tissue distribution, expressed by the venom gland.

Its subcellular location is the secreted. Functionally, this heterodimer may have anti-inflammatory properties, since the myrmexin complex (composed of 6 SS-LS heterodimers) inhibits carrageenin-induced edema in a dose-dependent manner (after subcutaneous injection into rats). The polypeptide is U1-pseudomyrmecitoxin-Pt1 subunit LS1 (Pseudomyrmex triplarinus (Ant)).